A 264-amino-acid polypeptide reads, in one-letter code: MERVRGACQSPILILLAIVLPFPSTSGPAIHPLIESLAARIRQRRAQLPELSPFALDSVMESISGQLDGEELLISNELHRCRGLRKLHLEIARLGGGLQVLHCVFFPDPRFDLPIFGADIVASPAGISAAIVDLSPVGLTMPVALLHGLESLPIPAFQQVRELPAWGSIFSPFVQFIRPASSEEESWFVDLADGYLKALISSVIDATPDASDAASTIQRHKSQLSYCIQQKRNDKTRGVLEKAFNPQWADRYIEEILFEDPPPL.

The protein belongs to the HY2 family.

It carries out the reaction (2R,3Z)-phycocyanobilin + 4 oxidized [2Fe-2S]-[ferredoxin] = biliverdin IXalpha + 4 reduced [2Fe-2S]-[ferredoxin] + 4 H(+). Functionally, catalyzes the four-electron reduction of biliverdin IX-alpha (2-electron reduction at both the A and D rings); the reaction proceeds via an isolatable 2-electron intermediate, 181,182-dihydrobiliverdin. This is Phycocyanobilin:ferredoxin oxidoreductase from Prochlorococcus marinus (strain MIT 9303).